The primary structure comprises 252 residues: 3-dehydroquinate dehydratase (252 aa).

Residues Ser-21, 46-48 (EWR), and Arg-82 each bind 3-dehydroquinate. His-143 functions as the Proton donor/acceptor in the catalytic mechanism. Lys-170 functions as the Schiff-base intermediate with substrate in the catalytic mechanism. 3-dehydroquinate contacts are provided by Arg-213, Ser-232, and Gln-236.

This sequence belongs to the type-I 3-dehydroquinase family. Homodimer.

It catalyses the reaction 3-dehydroquinate = 3-dehydroshikimate + H2O. The protein operates within metabolic intermediate biosynthesis; chorismate biosynthesis; chorismate from D-erythrose 4-phosphate and phosphoenolpyruvate: step 3/7. Functionally, involved in the third step of the chorismate pathway, which leads to the biosynthesis of aromatic amino acids. Catalyzes the cis-dehydration of 3-dehydroquinate (DHQ) and introduces the first double bond of the aromatic ring to yield 3-dehydroshikimate. The sequence is that of 3-dehydroquinate dehydratase from Salmonella dublin (strain CT_02021853).